A 497-amino-acid chain; its full sequence is MSSLTDKTRNGALKRNLLRQMLKASVFKFGEFQLKSGQISPIYIDLRECFGHPGLLMLISEAISKQVEISEVQYAGVLGIPYAALPYASVAAGNYLKKPLLIVRKEAKSYGTKKLIEGLYQPNDRLILIEDVVTTGGSILDVVKVLHTENLVASDVFCILDREQGGRQKLQDAGVTLHSLLDMQTVLTFLYSTGAIGDEQWHGIVQALNLPYTSPTKLEINSELENLSSLPYVENVRTPLAERESLTESALIKKILGIMRRKKSNLCLAVDYTTVEQCLQMIELAGPFVLAIKLHADAITDFNEEFTRKLTTMANDMDFIIFEDRKFGDTGNTNLLQLTGAQKIANWADVVTVHAVQGSDSIAGVFRKLAKDPTYRLSGVLLIAQLSTKGSLTALEGYTETAVKIANENRDVISGFITQTRVSACSDLLNWTPGVNLDAKSDSAGQQWRGVDEAIEVQQNDIIIVGRGVTSSSEPVQQLKRYRQIAWDALTRSDDSI.

An OPRTase region spans residues threonine 8–asparagine 226. A domain linker region spans residues leucine 227–tyrosine 232. The segment at valine 233–serine 496 is OMPdecase. UMP-binding positions include aspartate 271 and lysine 293–histidine 295. Lysine 293 serves as a coordination point for orotidine 5'-phosphate. Catalysis depends on for OMPdecase activity residues aspartate 324, lysine 326, and aspartate 329. Orotidine 5'-phosphate contacts are provided by residues lysine 326, aspartate 329, threonine 333, serine 387, glutamine 446–tryptophan 448, and glycine 466–arginine 467. Residues aspartate 329, threonine 333, serine 387, glutamine 446–tryptophan 448, and glycine 466–arginine 467 each bind UMP.

The protein in the N-terminal section; belongs to the purine/pyrimidine phosphoribosyltransferase family. It in the C-terminal section; belongs to the OMP decarboxylase family. In terms of tissue distribution, expressed in intestine and in neurons near the nerve ring and rectum.

The protein localises to the cytoplasm. The catalysed reaction is orotidine 5'-phosphate + diphosphate = orotate + 5-phospho-alpha-D-ribose 1-diphosphate. The enzyme catalyses orotidine 5'-phosphate + H(+) = UMP + CO2. Its pathway is pyrimidine metabolism; UMP biosynthesis via de novo pathway; UMP from orotate: step 1/2. The protein operates within pyrimidine metabolism; UMP biosynthesis via de novo pathway; UMP from orotate: step 2/2. Bifunctional enzyme which catalyzes the formation of UMP from orotate in the de novo pathway of pyrimidine biosynthesis. May also form UMP from uracil. Regulates the size of gut granules during embryonic development. Involved in resistance to DNA damaging agents including UV-C and X-ray radiation. The sequence is that of Uridine 5'-monophosphate synthase from Caenorhabditis elegans.